The chain runs to 610 residues: Major facilitator superfamily multidrug transporter FLU1 (610 aa).

Asn-3 and Asn-21 each carry an N-linked (GlcNAc...) asparagine glycan. Residues 47-58 (GPTDSVESSSNT) show a composition bias toward polar residues. Positions 47-74 (GPTDSVESSSNTADEENEINSFNAQNVK) are disordered. 11 helical membrane passes run 165–185 (ILYC…SAMF), 209–229 (LFVF…ELFG), 231–251 (KLVM…VATA), 262–282 (FFAG…MADM), 292–312 (IAIF…LGAF), 323–343 (WTSY…TFLL), 408–428 (AFIY…FLGE), 437–457 (ELPY…IMLF), 478–498 (LEPM…LGWT), 507–527 (WIVP…IFLP), and 530–550 (NYII…NTFI). Asn-568 is a glycosylation site (N-linked (GlcNAc...) asparagine). Residues 573–593 (WASTLLGCIGILLLPMPFVFY) form a helical membrane-spanning segment.

This sequence belongs to the major facilitator superfamily. DHA1 family. Polyamines/proton antiporter (TC 2.A.1.2.16) subfamily.

Its subcellular location is the cell membrane. Functionally, major facilitator superfamily transporter that mediates resistance to structurally and functionally unrelated compounds including cycloheximide but also azoles such as fuconazole, ketoconazole and itraconazole. Also mediates efflux of histatin 5, a salivary human antimicrobial peptide, and is responsible for reduction of its toxicity in C.albicans. The polypeptide is Major facilitator superfamily multidrug transporter FLU1 (Candida albicans (strain SC5314 / ATCC MYA-2876) (Yeast)).